A 283-amino-acid polypeptide reads, in one-letter code: Phosphatidylglycerol--prolipoprotein diacylglyceryl transferase (283 aa).

3 helical membrane passes run 17 to 37, 56 to 76, and 88 to 108; these read LAVR…TFLG, FLTW…VLFY, and IFKV…VVIA. R139 contacts a 1,2-diacyl-sn-glycero-3-phospho-(1'-sn-glycerol). 2 helical membrane-spanning segments follow: residues 222–242 and 255–275; these read GQVA…AEFA and GLSM…VGFV.

It belongs to the Lgt family.

The protein resides in the cell inner membrane. The enzyme catalyses L-cysteinyl-[prolipoprotein] + a 1,2-diacyl-sn-glycero-3-phospho-(1'-sn-glycerol) = an S-1,2-diacyl-sn-glyceryl-L-cysteinyl-[prolipoprotein] + sn-glycerol 1-phosphate + H(+). It functions in the pathway protein modification; lipoprotein biosynthesis (diacylglyceryl transfer). In terms of biological role, catalyzes the transfer of the diacylglyceryl group from phosphatidylglycerol to the sulfhydryl group of the N-terminal cysteine of a prolipoprotein, the first step in the formation of mature lipoproteins. This Neisseria meningitidis serogroup B (strain ATCC BAA-335 / MC58) protein is Phosphatidylglycerol--prolipoprotein diacylglyceryl transferase.